A 433-amino-acid polypeptide reads, in one-letter code: Divalent metal cation transporter MntH (433 aa).

Helical transmembrane passes span 32–52 (LIFA…GNFA), 62–82 (GYDL…FQGL), 101–121 (TLPP…AMAT), 131–151 (IGIA…TGIV), 168–188 (LVIG…LLIV), 209–229 (ALTI…LFLH), 256–276 (VLAA…MAAG), 296–316 (SPLL…ASGV), 345–365 (ALTM…TRAL), 366–386 (VLSQ…LLWF), and 401–421 (ITAI…VILL).

Belongs to the NRAMP family.

The protein resides in the cell inner membrane. Functionally, h(+)-stimulated, divalent metal cation uptake system. The chain is Divalent metal cation transporter MntH from Acidiphilium cryptum (strain JF-5).